The following is a 100-amino-acid chain: MIREERLLKVIVAPHISEKSTIAAEENNTIVFKVAKDSTKAEVKAAVEKLFEVEVTGVRTLNVKGKTKRTGARFGRRNDWKKAYVTLKEGSELDFVGGAE.

It belongs to the universal ribosomal protein uL23 family. Part of the 50S ribosomal subunit. Contacts protein L29, and trigger factor when it is bound to the ribosome.

Its function is as follows. One of the early assembly proteins it binds 23S rRNA. One of the proteins that surrounds the polypeptide exit tunnel on the outside of the ribosome. Forms the main docking site for trigger factor binding to the ribosome. The protein is Large ribosomal subunit protein uL23 of Pseudoalteromonas translucida (strain TAC 125).